The chain runs to 448 residues: Asparagine--tRNA ligase (448 aa).

The protein belongs to the class-II aminoacyl-tRNA synthetase family. As to quaternary structure, homodimer.

It is found in the cytoplasm. The enzyme catalyses tRNA(Asn) + L-asparagine + ATP = L-asparaginyl-tRNA(Asn) + AMP + diphosphate + H(+). This is Asparagine--tRNA ligase from Streptococcus pyogenes serotype M12 (strain MGAS9429).